A 172-amino-acid chain; its full sequence is Adenine phosphoribosyltransferase (172 aa).

The protein belongs to the purine/pyrimidine phosphoribosyltransferase family. As to quaternary structure, homodimer.

The protein resides in the cytoplasm. It carries out the reaction AMP + diphosphate = 5-phospho-alpha-D-ribose 1-diphosphate + adenine. It functions in the pathway purine metabolism; AMP biosynthesis via salvage pathway; AMP from adenine: step 1/1. Its function is as follows. Catalyzes a salvage reaction resulting in the formation of AMP, that is energically less costly than de novo synthesis. The protein is Adenine phosphoribosyltransferase of Roseiflexus sp. (strain RS-1).